The sequence spans 286 residues: Bifunctional protein FolD (286 aa).

NADP(+) is bound by residues 165-167 and serine 190; that span reads GRS.

This sequence belongs to the tetrahydrofolate dehydrogenase/cyclohydrolase family. In terms of assembly, homodimer.

The catalysed reaction is (6R)-5,10-methylene-5,6,7,8-tetrahydrofolate + NADP(+) = (6R)-5,10-methenyltetrahydrofolate + NADPH. It catalyses the reaction (6R)-5,10-methenyltetrahydrofolate + H2O = (6R)-10-formyltetrahydrofolate + H(+). Its pathway is one-carbon metabolism; tetrahydrofolate interconversion. Functionally, catalyzes the oxidation of 5,10-methylenetetrahydrofolate to 5,10-methenyltetrahydrofolate and then the hydrolysis of 5,10-methenyltetrahydrofolate to 10-formyltetrahydrofolate. The sequence is that of Bifunctional protein FolD from Staphylococcus epidermidis (strain ATCC 12228 / FDA PCI 1200).